Here is a 440-residue protein sequence, read N- to C-terminus: Ferredoxin--NADP reductase (440 aa).

In terms of domain architecture, CpcD-like spans Ser-17–Val-75. Residues Ala-93–Ala-142 form a disordered region. Over residues Pro-122–Lys-133 the composition is skewed to basic and acidic residues. The FAD-binding FR-type domain maps to Asn-155–Leu-279. FAD is bound by residues Arg-214–Ser-217, Cys-235–Arg-237, Tyr-241, Val-253–Ser-255, and Thr-294. NADP(+)-binding residues include Ser-217 and Arg-237. Residues Thr-294, Val-330–Pro-331, Ser-360–Arg-361, Arg-370–Gln-374, Gly-399–Leu-400, and Glu-438 contribute to the NADP(+) site.

Belongs to the ferredoxin--NADP reductase type 1 family. The cofactor is FAD.

The protein localises to the cellular thylakoid membrane. It catalyses the reaction 2 reduced [2Fe-2S]-[ferredoxin] + NADP(+) + H(+) = 2 oxidized [2Fe-2S]-[ferredoxin] + NADPH. This chain is Ferredoxin--NADP reductase (petH), found in Trichormus variabilis (strain ATCC 29413 / PCC 7937) (Anabaena variabilis).